The primary structure comprises 189 residues: MTTTHGSTYEFRSARPGDAEAIEGLDGSFTTSTVFEVDVTGDGFALREVPADPPLVKVFPDDGGSDGEDGAEGEDADSRTFVAVGADGDLAGFAAVSYSAWNQRLTIEDIEVAPGHRGKGIGRVLMRHAADFARERGAGHLWLEVTNVNAPAIHAYRRMGFAFCGLDSALYQGTASEGEHALYMSMPCP.

One can recognise an N-acetyltransferase domain in the interval 44-189 (FALREVPADP…HALYMSMPCP (146 aa)). The tract at residues 55 to 76 (LVKVFPDDGGSDGEDGAEGEDA) is disordered. Over residues 63–75 (GGSDGEDGAEGED) the composition is skewed to acidic residues.

The protein belongs to the acetyltransferase family. GNAT subfamily.

It carries out the reaction streptothricin F + acetyl-CoA = N(beta)-acetylstreptothricin F + CoA + H(+). Involved in resistance to streptothricin, a broad-spectrum antibiotic produced by streptomycetes. Detoxifies streptothricin via acetylation of the beta amino group of the first beta-lysyl moiety of streptothricin. The polypeptide is Streptothricin acetyltransferase (Streptomyces lavendulae).